The primary structure comprises 380 residues: Cytochrome b (380 aa).

A run of 4 helical transmembrane segments spans residues 33–53 (FGSLLGLCLATQILTGLFLAM), 77–98 (WLIRNMHANGASFFFICIYLHI), 113–133 (WNVGVALFLLTMMTAFVGYVL), and 178–198 (FFAFHFLFPFVIAALTAIHLL). Heme b is bound by residues histidine 83 and histidine 97. The heme b site is built by histidine 182 and histidine 196. Histidine 201 contributes to the a ubiquinone binding site. Transmembrane regions (helical) follow at residues 226–246 (YKDLLGFATLMVTLTSLALFS), 288–308 (LGGVLALLSSILILTAVPALH), 320–340 (ITQLLFWTLVAAVLVLTWIGG), and 347–367 (FIIIGQIASLLYFMLFLTLIP).

Belongs to the cytochrome b family. The cytochrome bc1 complex contains 3 respiratory subunits (MT-CYB, CYC1 and UQCRFS1), 2 core proteins (UQCRC1 and UQCRC2) and probably 6 low-molecular weight proteins. Heme b is required as a cofactor.

It is found in the mitochondrion inner membrane. Its function is as follows. Component of the ubiquinol-cytochrome c reductase complex (complex III or cytochrome b-c1 complex) that is part of the mitochondrial respiratory chain. The b-c1 complex mediates electron transfer from ubiquinol to cytochrome c. Contributes to the generation of a proton gradient across the mitochondrial membrane that is then used for ATP synthesis. The polypeptide is Cytochrome b (mt-cyb) (Percopsis transmontana (Sand roller)).